Consider the following 157-residue polypeptide: Small ribosomal subunit protein uS7 (157 aa).

The protein belongs to the universal ribosomal protein uS7 family. As to quaternary structure, part of the 30S ribosomal subunit. Contacts proteins S9 and S11.

One of the primary rRNA binding proteins, it binds directly to 16S rRNA where it nucleates assembly of the head domain of the 30S subunit. Is located at the subunit interface close to the decoding center, probably blocks exit of the E-site tRNA. This Pseudomonas fluorescens (strain Pf0-1) protein is Small ribosomal subunit protein uS7.